A 194-amino-acid chain; its full sequence is GTP cyclohydrolase 1 (194 aa).

3 residues coordinate Zn(2+): cysteine 83, histidine 86, and cysteine 155.

This sequence belongs to the GTP cyclohydrolase I family. In terms of assembly, toroid-shaped homodecamer, composed of two pentamers of five dimers.

It catalyses the reaction GTP + H2O = 7,8-dihydroneopterin 3'-triphosphate + formate + H(+). The protein operates within cofactor biosynthesis; 7,8-dihydroneopterin triphosphate biosynthesis; 7,8-dihydroneopterin triphosphate from GTP: step 1/1. The polypeptide is GTP cyclohydrolase 1 (folE) (Streptococcus pyogenes).